Reading from the N-terminus, the 250-residue chain is Short-chain dehydrogenase RED3 (250 aa).

4 residues coordinate NADP(+): I16, S35, E63, and N91. Residues S145 and Y164 each act as proton donor in the active site. Positions 164, 168, 195, and 197 each coordinate NADP(+). Catalysis depends on K168, which acts as the Lowers pKa of active site Tyr.

Belongs to the short-chain dehydrogenases/reductases (SDR) family.

The protein operates within polyketide biosynthesis. Functionally, short-chain dehydrogenase; part of the gene cluster that mediates the biosynthesis of pyriculol and pyriculariol, two heptaketides that induce lesion formation upon application on rice leaves but are dispensable for pathogenicity. The highly reducing polyketide synthase synthesizes the heptaketide backbone of pyriculol and pyriculariol. Pyriculol and pyriculariol contain several hydroxyl moieties and double bonds, so it can be assumed that several reduction steps occur during biosynthesis. These reactions could be executed by PKS19 itself or partly by the tailoring enzymes OXR1, OXR2, RED1, RED2 or RED3, identified within the cluster. The FAD-linked oxidoreductase OXR1 is the only tailoring enzyme for which the function has been determined yet, and is involved in the oxidation of dihydropyriculol and dihydropyriculariol into pyriculol and pyriculariol, respectively. This is Short-chain dehydrogenase RED3 from Pyricularia oryzae (strain 70-15 / ATCC MYA-4617 / FGSC 8958) (Rice blast fungus).